A 432-amino-acid polypeptide reads, in one-letter code: MLAGRAARTCALLALCLLGSGAQDFGPTRFICTSVPVDADMCAASVAAGGAEELRSNVLQLRETVLQQKETILSQKETIRELTTKLGRCESQSTLDSGPGEARSGGGRKQPGSGKNTMGDLSRTPAAETLSQLGQTLQSLKTRLENLEQYSRLNSSSQTNSLKDLLQSKIDDLERQVLSRVNTLEEGKGGPKNDTEERAKIESALTSLHQRISELEKGQKDNRPGDKFQLTFPLRTNYMYAKVKKSLPEMYAFTVCMWLKSSAAPGVGTPFSYAVPGQANELVLIEWGNNPMEILINDKVAKLPFVINDGKWHHICVTWTTRDGVWEAYQDGTQGGNGENLAPYHPIKPQGVLVLGQEQDTLGGGFDATQAFVGELAHFNIWDRKLTPGEVYNLATCSSKALSGNVIAWAESQIEIFGGATKWTFEACRQIN.

An N-terminal signal peptide occupies residues 1-22 (MLAGRAARTCALLALCLLGSGA). The interval 88–122 (RCESQSTLDSGPGEARSGGGRKQPGSGKNTMGDLS) is disordered. N-linked (GlcNAc...) asparagine glycosylation is found at N154 and N193. One can recognise a Pentraxin (PTX) domain in the interval 226-428 (DKFQLTFPLR…GATKWTFEAC (203 aa)). A disulfide bridge links C256 with C316. 5 residues coordinate Ca(2+): N280, E358, Q359, D360, and Q370.

Homooligomer or heterooligomer (probably pentamer) with neuronal pentraxin receptor (NPTXR). Ca(2+) is required as a cofactor. In terms of tissue distribution, expressed in brain and kidney.

The protein localises to the secreted. It localises to the cytoplasmic vesicle. Its subcellular location is the secretory vesicle. It is found in the endoplasmic reticulum. In terms of biological role, may be involved in mediating uptake of synaptic material during synapse remodeling or in mediating the synaptic clustering of AMPA glutamate receptors at a subset of excitatory synapses. The chain is Neuronal pentraxin-1 (Nptx1) from Mus musculus (Mouse).